The following is a 195-amino-acid chain: Ras-related protein rac-2 (195 aa).

10 to 17 contributes to the GTP binding site; it reads GDGAVGKT. An Effector region motif is present at residues 32-40; it reads YILTVFDTY. Residues 57–61 and 115–118 each bind GTP; these read DTAGQ and TKAD. A disordered region spans residues 176–195; that stretch reads GLTPPQTPQTRAKKSNCTVL. Residue cysteine 192 is modified to Cysteine methyl ester. The S-geranylgeranyl cysteine moiety is linked to residue cysteine 192. The propeptide at 193–195 is removed in mature form; sequence TVL.

It belongs to the small GTPase superfamily. Rho family.

The protein localises to the cell membrane. Its function is as follows. During gonad morphogenesis, plays a role in distal tip cell (DTC)-mediated guidance of gonad elongation. The sequence is that of Ras-related protein rac-2 (rac-2) from Caenorhabditis elegans.